Reading from the N-terminus, the 1371-residue chain is F-actin-uncapping protein LRRC16A (1371 aa).

Met-1 is subject to N-acetylmethionine. Ser-122 carries the post-translational modification Phosphoserine. LRR repeat units lie at residues 245–269, 275–298, 304–327, 336–363, 391–418, 423–447, 481–506, 543–566, 570–593, and 654–678; these read SNRL…LASA, NSGL…SLSI, PKGL…SLSQ, ASTL…FLAQ, LQYL…SFKQ, SLAL…LLLG, IHNI…VWLS, ESPL…IINA, NTSL…MLAK, and LQKI…AYRL. Positions 710–734 form a coiled coil; the sequence is GDAIQEDLKSAERLMRDAKNSKTLL. Residue Thr-916 is modified to Phosphothreonine. Disordered regions lie at residues 957-1000, 1036-1159, and 1172-1371; these read PFPS…QPTQ, KMDS…RRYG, and KAKQ…FIFV. One copy of the LRR 11 repeat lies at 958 to 981; sequence FPSLRQEKRSSGFISELPSEEGKK. An inhibits capping activity of CAPZA2 region spans residues 958-1082; it reads FPSLRQEKRS…LIKSRSKSER (125 aa). Ser-968 is subject to Phosphoserine. 2 stretches are compositionally biased toward basic and acidic residues: residues 977–986 and 1036–1061; these read EEGKKLEHFT and KMDS…EKKK. A necessary for localization at the cell membrane region spans residues 1055–1089; it reads GGDEKKKRDSRKSSGFLNLIKSRSKSERPPTILMT. Phosphoserine occurs at positions 1067 and 1094. Basic and acidic residues-rich tracts occupy residues 1106–1130 and 1139–1148; these read CPRK…KTPD and EIGKVERSDS. A compositionally biased stretch (polar residues) spans 1190 to 1199; the sequence is AVSQDSSSPA. Thr-1228 is subject to Phosphothreonine. A compositionally biased stretch (basic and acidic residues) spans 1231–1243; the sequence is KNTKAEPKAEAGS. The segment covering 1244–1265 has biased composition (low complexity); the sequence is RSRSSSSTPTSPKPLLQSPKPS. A phosphoserine mark is found at Ser-1280, Ser-1288, Ser-1291, Ser-1315, Ser-1324, and Ser-1331. A compositionally biased stretch (polar residues) spans 1313–1326; it reads QSSPQPSPRTFSQE. Over residues 1340 to 1353 the composition is skewed to basic and acidic residues; it reads QEQKQRSSSKDGHQ. At Ser-1360 the chain carries Phosphoserine.

The protein belongs to the CARMIL family. As to quaternary structure, homodimer. Interacts (via C-terminus) with heterodimer capping protein (CP); this interaction uncaps barbed ends capped by CP, enhances barbed-end actin polymerization and promotes lamellipodial formation and cell migration. Interacts with heterodimer capping protein (CP). Interacts with MYO1E. Interacts with TRIO. As to expression, expressed in lung, placenta, small intestine, liver, thymus, colon, skeletal muscle, heart and brain. Higher expression in kidney.

It localises to the cytoplasm. Its subcellular location is the cytoskeleton. It is found in the cell membrane. The protein localises to the cell projection. The protein resides in the lamellipodium. In terms of biological role, cell membrane-cytoskeleton-associated protein that plays a role in the regulation of actin polymerization at the barbed end of actin filaments. Prevents F-actin heterodimeric capping protein (CP) activity at the leading edges of migrating cells, and hence generates uncapped barbed ends and enhances actin polymerization, however, seems unable to nucleate filaments. Plays a role in lamellipodial protrusion formations and cell migration. This chain is F-actin-uncapping protein LRRC16A, found in Homo sapiens (Human).